Here is a 196-residue protein sequence, read N- to C-terminus: Recombination protein RecR (196 aa).

The C4-type zinc finger occupies Cys-57 to Cys-72. The region spanning Ser-80–Pro-175 is the Toprim domain.

The protein belongs to the RecR family.

Functionally, may play a role in DNA repair. It seems to be involved in an RecBC-independent recombinational process of DNA repair. It may act with RecF and RecO. This chain is Recombination protein RecR, found in Albidiferax ferrireducens (strain ATCC BAA-621 / DSM 15236 / T118) (Rhodoferax ferrireducens).